A 29-amino-acid polypeptide reads, in one-letter code: Cyclotide mobo-A (29 aa).

The segment at residues 1–29 is a cross-link (cyclopeptide (Gly-Asn)); that stretch reads GFPTCGETCTLGTCNTPGCTCSWPICTRN. 3 disulfide bridges follow: Cys5–Cys19, Cys9–Cys21, and Cys14–Cys26.

Belongs to the cyclotide family. Moebius subfamily. This is a cyclic peptide.

Probably participates in a plant defense mechanism. The polypeptide is Cyclotide mobo-A (Melicytus obovatus (Hymenanthera obovata)).